A 390-amino-acid chain; its full sequence is Histamine H4 receptor (390 aa).

At 1–19 (MPDTNSTINLSLSTRVTLA) the chain is on the extracellular side. 2 N-linked (GlcNAc...) asparagine glycosylation sites follow: Asn-5 and Asn-9. A helical membrane pass occupies residues 20–40 (FFMSLVAFAIMLGNALVILAF). At 41-52 (VVDKNLRHRSSY) the chain is on the cytoplasmic side. A helical transmembrane segment spans residues 53-73 (FFLNLAISDFFVGVISIPLYI). Residues 74-87 (PHTLFEWDFGKEIC) lie on the Extracellular side of the membrane. Cys-87 and Cys-164 form a disulfide bridge. A helical transmembrane segment spans residues 88–108 (VFWLTTDYLLCTASVYNIVLI). Topologically, residues 109–131 (SYDRYLSVSNAVSYRTQHTGVLK) are cytoplasmic. A helical membrane pass occupies residues 132–152 (IVTLMVAVWVLAFLVNGPMIL). Residues 153 to 172 (VSESWKDEGSECEPGFFSEW) lie on the Extracellular side of the membrane. The chain crosses the membrane as a helical span at residues 173 to 193 (YILAITSFLEFVIPVILVAYF). At 194-304 (NMNIYWSLWK…LLRARRLAKS (111 aa)) the chain is on the cytoplasmic side. A helical membrane pass occupies residues 305–325 (LAILLGVFAVCWAPYSLFTIV). The Extracellular portion of the chain corresponds to 326 to 341 (LSFYSSATGPKSVWYR). Residues 342–362 (IAFWLQWFNSFVNPLLYPLCH) traverse the membrane as a helical segment. Topologically, residues 363-390 (KRFQKAFLKIFCIKKQPLPSQHSRSVSS) are cytoplasmic.

The protein belongs to the G-protein coupled receptor 1 family. As to quaternary structure, interacts with TSPAN4. Expressed primarily in the bone marrow and eosinophils. Shows preferential distribution in cells of immunological relevance such as T-cells, dendritic cells, monocytes, mast cells, neutrophils. Also expressed in a wide variety of peripheral tissues, including the heart, kidney, liver, lung, pancreas, skeletal muscle, prostate, small intestine, spleen, testis, colon, fetal liver and lymph node.

The protein localises to the cell membrane. In terms of biological role, the H4 subclass of histamine receptors could mediate the histamine signals in peripheral tissues. Displays a significant level of constitutive activity (spontaneous activity in the absence of agonist). The polypeptide is Histamine H4 receptor (HRH4) (Homo sapiens (Human)).